The following is a 390-amino-acid chain: Sister chromatid cohesion protein DCC1 (390 aa).

It belongs to the DCC1 family. Component of the ctf18-RFC complex which consists of ctf18, ctf8, dscc1 and the RFC complex.

The protein localises to the nucleus. Its function is as follows. Loads pcna onto primed templates regulating velocity, spacing and restart activity of replication forks. May couple DNA replication to sister chromatid cohesion. The sequence is that of Sister chromatid cohesion protein DCC1 (dscc1) from Xenopus laevis (African clawed frog).